A 354-amino-acid chain; its full sequence is Ferrochelatase (354 aa).

Positions 214 and 295 each coordinate Fe cation.

Belongs to the ferrochelatase family.

It localises to the cytoplasm. The enzyme catalyses heme b + 2 H(+) = protoporphyrin IX + Fe(2+). It participates in porphyrin-containing compound metabolism; protoheme biosynthesis; protoheme from protoporphyrin-IX: step 1/1. In terms of biological role, catalyzes the ferrous insertion into protoporphyrin IX. This is Ferrochelatase from Burkholderia ambifaria (strain ATCC BAA-244 / DSM 16087 / CCUG 44356 / LMG 19182 / AMMD) (Burkholderia cepacia (strain AMMD)).